The following is a 289-amino-acid chain: Shikimate dehydrogenase (NADP(+)) (289 aa).

Residues 20 to 22 (SIS) and S67 contribute to the shikimate site. K71 (proton acceptor) is an active-site residue. Positions 92 and 107 each coordinate shikimate. NADP(+) is bound by residues 132–136 (GGGGA) and V230. Residue Y232 participates in shikimate binding. An NADP(+)-binding site is contributed by G253.

Belongs to the shikimate dehydrogenase family. Homodimer.

The enzyme catalyses shikimate + NADP(+) = 3-dehydroshikimate + NADPH + H(+). The protein operates within metabolic intermediate biosynthesis; chorismate biosynthesis; chorismate from D-erythrose 4-phosphate and phosphoenolpyruvate: step 4/7. Functionally, involved in the biosynthesis of the chorismate, which leads to the biosynthesis of aromatic amino acids. Catalyzes the reversible NADPH linked reduction of 3-dehydroshikimate (DHSA) to yield shikimate (SA). This chain is Shikimate dehydrogenase (NADP(+)), found in Streptococcus mutans serotype c (strain ATCC 700610 / UA159).